We begin with the raw amino-acid sequence, 372 residues long: Cytochrome b (372 aa).

The next 4 membrane-spanning stretches (helical) occupy residues Phe-25–Ile-45, Trp-69–Ile-90, Trp-105–Leu-125, and Phe-170–Ile-190. The heme b site is built by His-75 and His-89. Residues His-174 and His-188 each contribute to the heme b site. His-193 provides a ligand contact to a ubiquinone. Helical transmembrane passes span Tyr-218–Met-238, Leu-280–His-300, Leu-312–Thr-332, and Phe-339–Pro-358.

The protein belongs to the cytochrome b family. In terms of assembly, the cytochrome bc1 complex contains 3 respiratory subunits (MT-CYB, CYC1 and UQCRFS1), 2 core proteins (UQCRC1 and UQCRC2) and probably 6 low-molecular weight proteins. Heme b serves as cofactor.

It is found in the mitochondrion inner membrane. In terms of biological role, component of the ubiquinol-cytochrome c reductase complex (complex III or cytochrome b-c1 complex) that is part of the mitochondrial respiratory chain. The b-c1 complex mediates electron transfer from ubiquinol to cytochrome c. Contributes to the generation of a proton gradient across the mitochondrial membrane that is then used for ATP synthesis. This chain is Cytochrome b (MT-CYB), found in Hydrophis semperi (Lake Taal snake).